Here is a 260-residue protein sequence, read N- to C-terminus: 21S rRNA pseudouridine(2819) synthase (260 aa).

Residue aspartate 68 is part of the active site.

It belongs to the pseudouridine synthase RluA family.

Its subcellular location is the mitochondrion. The catalysed reaction is uridine(2819) in 21S rRNA = pseudouridine(2819) in 21S rRNA. Functionally, pseudouridylate synthase responsible for the pseudouridine-2819 formation in mitochondrial 21S rRNA. May modulate the efficiency or the fidelity of the mitochondrial translation machinery. This is 21S rRNA pseudouridine(2819) synthase (PUS5) from Eremothecium gossypii (strain ATCC 10895 / CBS 109.51 / FGSC 9923 / NRRL Y-1056) (Yeast).